Consider the following 354-residue polypeptide: Uroporphyrinogen decarboxylase (354 aa).

Substrate is bound by residues 27-31 (RQAGR), aspartate 77, tyrosine 154, serine 209, and histidine 327.

This sequence belongs to the uroporphyrinogen decarboxylase family. Homodimer.

The protein resides in the cytoplasm. It catalyses the reaction uroporphyrinogen III + 4 H(+) = coproporphyrinogen III + 4 CO2. It participates in porphyrin-containing compound metabolism; protoporphyrin-IX biosynthesis; coproporphyrinogen-III from 5-aminolevulinate: step 4/4. In terms of biological role, catalyzes the decarboxylation of four acetate groups of uroporphyrinogen-III to yield coproporphyrinogen-III. The polypeptide is Uroporphyrinogen decarboxylase (Shewanella baltica (strain OS223)).